We begin with the raw amino-acid sequence, 249 residues long: Sodium channel modifier 1 (249 aa).

The Bipartite nuclear localization signal signature appears at 4-20 (KREGDDQSQLNILKKRR). Residues 42 to 74 (YSCLVCSHRPVFDTVDMLVVHRKGKRHLEGMKW) form a Matrin-type zinc finger. Positions 94 to 103 (YVKAEDDRQE) are enriched in basic and acidic residues. Disordered regions lie at residues 94–116 (YVKA…QTRK), 128–199 (YSSC…PLTE), and 228–249 (ENVE…SESS). Positions 104–115 (PSSSAPLLTQTR) are enriched in polar residues. A compositionally biased stretch (basic and acidic residues) spans 134–149 (KASERSESSSKEHRND). Polar residues predominate over residues 150 to 170 (LANSHLSMRTESNDSRTTVHQ). The span at 230–239 (VEFDSDEEEP) shows a compositional bias: acidic residues.

As to quaternary structure, component of the minor spliceosome, which splices U12-type introns.

The protein resides in the nucleus. The protein localises to the nucleoplasm. It is found in the nucleus speckle. As a component of the minor spliceosome, involved in the splicing of U12-type introns in pre-mRNAs. The polypeptide is Sodium channel modifier 1 (scnm1) (Danio rerio (Zebrafish)).